The following is a 308-amino-acid chain: Ornithine carbamoyltransferase (308 aa).

Carbamoyl phosphate-binding positions include R103 and 130 to 133 (HPAQ). L-ornithine contacts are provided by residues N162, D221, and 225–226 (SM). Carbamoyl phosphate-binding positions include 261–262 (CL) and R289.

Belongs to the aspartate/ornithine carbamoyltransferase superfamily. OTCase family.

It is found in the cytoplasm. It catalyses the reaction carbamoyl phosphate + L-ornithine = L-citrulline + phosphate + H(+). The protein operates within amino-acid biosynthesis; L-arginine biosynthesis; L-arginine from L-ornithine and carbamoyl phosphate: step 1/3. Reversibly catalyzes the transfer of the carbamoyl group from carbamoyl phosphate (CP) to the N(epsilon) atom of ornithine (ORN) to produce L-citrulline. This Deinococcus radiodurans (strain ATCC 13939 / DSM 20539 / JCM 16871 / CCUG 27074 / LMG 4051 / NBRC 15346 / NCIMB 9279 / VKM B-1422 / R1) protein is Ornithine carbamoyltransferase.